The following is a 421-amino-acid chain: UDP-N-acetylglucosamine 1-carboxyvinyltransferase (421 aa).

22–23 (KN) is a binding site for phosphoenolpyruvate. Residue R92 coordinates UDP-N-acetyl-alpha-D-glucosamine. The Proton donor role is filled by D116. Residues 121 to 125 (RPIDQ), D307, and I330 contribute to the UDP-N-acetyl-alpha-D-glucosamine site.

Belongs to the EPSP synthase family. MurA subfamily.

The protein resides in the cytoplasm. The enzyme catalyses phosphoenolpyruvate + UDP-N-acetyl-alpha-D-glucosamine = UDP-N-acetyl-3-O-(1-carboxyvinyl)-alpha-D-glucosamine + phosphate. The protein operates within cell wall biogenesis; peptidoglycan biosynthesis. Functionally, cell wall formation. Adds enolpyruvyl to UDP-N-acetylglucosamine. The polypeptide is UDP-N-acetylglucosamine 1-carboxyvinyltransferase (Lactobacillus johnsonii (strain CNCM I-12250 / La1 / NCC 533)).